Consider the following 310-residue polypeptide: Vomeronasal type-1 receptor 44 (310 aa).

Residues 1-20 are Extracellular-facing; the sequence is MNKANLLHIDTNIKITLLAE. Residues 21–41 traverse the membrane as a helical segment; the sequence is VSVGISANSILFIAYLCMLLG. Topologically, residues 42–50 are cytoplasmic; the sequence is ENRHKPIDL. Residues 51–71 traverse the membrane as a helical segment; the sequence is YIAFLSLTQLMLLITMGLIAV. The Extracellular segment spans residues 72–93; sequence DMFMPWGRWDSTTCQSLIYLHR. Cysteines 85 and 172 form a disulfide. A helical transmembrane segment spans residues 94 to 114; the sequence is FLRGLTLCATCLLNVLWTITL. Residues 115-131 are Cytoplasmic-facing; sequence SSRNSCLAKFKHKYPHH. Residues 132-152 form a helical membrane-spanning segment; that stretch reads ISGAFLFLCVLYMSFSSHFLV. Residues 153 to 190 lie on the Extracellular side of the membrane; sequence SMTVTPNLTSENFMYVTQSCSLLPMSYSRTSMFSTPVA. Residue asparagine 159 is glycosylated (N-linked (GlcNAc...) asparagine). Residues 191 to 211 form a helical membrane-spanning segment; sequence IRETFLISLMALSSGYMVALL. Over 212–238 the chain is Cytoplasmic; sequence WRHKKQAQHLRSTSLSSKASPEQRATR. The chain crosses the membrane as a helical span at residues 239–259; sequence TILLLMSFFVVFYILDTVIFH. The Extracellular segment spans residues 260-268; it reads SRMKFKDGS. The helical transmembrane segment at 269–289 threads the bilayer; the sequence is ILYCFQIIVSHSYVTVSPFVF. Over 290–310 the chain is Cytoplasmic; that stretch reads ICTEKHIIKFLRSMCGRIANI.

It belongs to the G-protein coupled receptor 1 family.

It is found in the cell membrane. Functionally, putative pheromone receptor implicated in the regulation of social and reproductive behavior. This is Vomeronasal type-1 receptor 44 (Vmn1r44) from Mus musculus (Mouse).